The primary structure comprises 157 residues: MTMRYIIKRKIYWTKEFDSSHFLELEYESKCKRIHGHTYKVEVEIEGELNEEGMIFDFTHLSEIVKELDHRLIVSKEWVKEVGDLVIIEKNRKILKVPRDEVVIIDKPNVTAEYLAEWFGERIAENAGSNIKKIKVRIWEDPRSYAEVTFTLEPQGS.

Residue His21 coordinates Zn(2+). Catalysis depends on Cys31, which acts as the Proton acceptor. 2 residues coordinate Zn(2+): His35 and His37. Active-site charge relay system residues include His70 and Glu140.

The protein belongs to the PTPS family. QueD subfamily. Requires Zn(2+) as cofactor.

The enzyme catalyses 7,8-dihydroneopterin 3'-triphosphate + H2O = 6-carboxy-5,6,7,8-tetrahydropterin + triphosphate + acetaldehyde + 2 H(+). It functions in the pathway purine metabolism; 7-cyano-7-deazaguanine biosynthesis. In terms of biological role, catalyzes the conversion of 7,8-dihydroneopterin triphosphate (H2NTP) to 6-carboxy-5,6,7,8-tetrahydropterin (CPH4) and acetaldehyde. The chain is Putative 6-carboxy-5,6,7,8-tetrahydropterin synthase (queD) from Pyrococcus horikoshii (strain ATCC 700860 / DSM 12428 / JCM 9974 / NBRC 100139 / OT-3).